Consider the following 379-residue polypeptide: DNA-directed RNA polymerase subunit Rpo1C (379 aa).

Belongs to the RNA polymerase beta' chain family. As to quaternary structure, part of the RNA polymerase complex.

The protein resides in the cytoplasm. It carries out the reaction RNA(n) + a ribonucleoside 5'-triphosphate = RNA(n+1) + diphosphate. In terms of biological role, DNA-dependent RNA polymerase (RNAP) catalyzes the transcription of DNA into RNA using the four ribonucleoside triphosphates as substrates. Forms part of the jaw domain. This chain is DNA-directed RNA polymerase subunit Rpo1C, found in Pyrobaculum aerophilum (strain ATCC 51768 / DSM 7523 / JCM 9630 / CIP 104966 / NBRC 100827 / IM2).